Here is a 323-residue protein sequence, read N- to C-terminus: Breast cancer metastasis-suppressor 1-like protein (323 aa).

Basic and acidic residues predominate over residues 1–15 (MPVHSREKKENNHDE). The disordered stretch occupies residues 1 to 56 (MPVHSREKKENNHDEMEVDYGENEGSTSEEEETESSSVSEEGDSSEMDDEDCERRR). Acidic residues predominate over residues 16–51 (MEVDYGENEGSTSEEEETESSSVSEEGDSSEMDDED). Coiled-coil stretches lie at residues 50–82 (EDCERRRMECLDEMSNLEKQFTDLKDQLYKERL) and 147–178 (EKLLLYDTVQSELEEKIRRLEEDRHSIDITSE).

The protein belongs to the BRMS1 family.

It is found in the nucleus. Functionally, involved in the histone deacetylase (HDAC1)-dependent transcriptional repression activity. The polypeptide is Breast cancer metastasis-suppressor 1-like protein (BRMS1L) (Gallus gallus (Chicken)).